The sequence spans 357 residues: Phosphoribosylformylglycinamidine cyclo-ligase (357 aa).

It belongs to the AIR synthase family.

The protein resides in the cytoplasm. It carries out the reaction 2-formamido-N(1)-(5-O-phospho-beta-D-ribosyl)acetamidine + ATP = 5-amino-1-(5-phospho-beta-D-ribosyl)imidazole + ADP + phosphate + H(+). The protein operates within purine metabolism; IMP biosynthesis via de novo pathway; 5-amino-1-(5-phospho-D-ribosyl)imidazole from N(2)-formyl-N(1)-(5-phospho-D-ribosyl)glycinamide: step 2/2. The protein is Phosphoribosylformylglycinamidine cyclo-ligase of Allorhizobium ampelinum (strain ATCC BAA-846 / DSM 112012 / S4) (Agrobacterium vitis (strain S4)).